Here is a 941-residue protein sequence, read N- to C-terminus: MPTWRYIFSLRSKSSFTKTWVPFTQIRNSSKSPKVGQKPILQGALGPPLDFIRPKEKVTLPPLLKEVSFQQKKFADCVLLTKVGNFYEMYFEQAEKIGPLLNLRVSKKKTSKSDVSMAGFPFFKLDRYLKILVEDLKKCVALSEEVIRPVDDLSSKNMYIRSVTRVITPGTLIDENFMNPYESNYILTVVFDPNFFSSDISNQGTAEDKDCFADCKIGLSWLDLSTGEFFTQDSNLQRLAGDLTRISPREIVLDESLKSFTTHPIYSFIQERKYFLSYVENRYQSLDCWNKFLEKEIDPSFIKYCTKLEVTAGCTLISYIADRLQNSHPNIQPPIRVSLNEYMIIGESAMKGLEIRSSLYQNRYTGSLLHAINKTVTKSGSRLLTRRLCAPSTNIVEINNRLDLVEKFKLLPELCSKVINLLKKSNDTHRILQHLLMGRGNSYDLLKMADNFSITKEIHSLLSPLESSSAFRLLLLNMHPHDELKQLINNAVDENALMKQKINEEEETEVIAQEAEEILQDENAQVEIVKKSLSSEFDIRQSFKENWVVKSNFNNNLRKLHEKLQSLFASYDKLQEDLSKRLGKKATLRKSPAKLYYVHLKLSGNETIERFIKKFTQAVLFQSTKSTASFQLPGWTSLGMDLENTKLHIHQEEQRVLKSITDEIVSHHKTLRSLANALDELDISTSLATLAQEQDFVRPVVDDSHAHTVIQGRHPIVEKGLSHKLIPFTPNDCFVGNGNVNIWLITGPNMAGKSTFLRQNAIISILAQIGSFVPASNARIGIVDQIFSRIGSADNLYQQKSTFMVEMMETSFILKNATRRSFVIMDEIGRGTTASDGIAIAYGCLKYLSTINHSRTLFATHAHQLTNLTKSFKNVECYCTNLSIDRDDHTFSFDYKLKKGVNYQSHGLKVAEMAGIPKNVLLAAEEVLTLLPNTSKPTSMK.

747-754 (GPNMAGKS) contacts ATP.

Belongs to the DNA mismatch repair MutS family.

Its subcellular location is the cytoplasm. It localises to the mitochondrion. Involved in mitochondrial DNA repair. In Schizosaccharomyces pombe (strain 972 / ATCC 24843) (Fission yeast), this protein is MutS protein homolog 1 (msh1).